Consider the following 95-residue polypeptide: Aspartyl/glutamyl-tRNA(Asn/Gln) amidotransferase subunit C (95 aa).

Belongs to the GatC family. Heterotrimer of A, B and C subunits.

The enzyme catalyses L-glutamyl-tRNA(Gln) + L-glutamine + ATP + H2O = L-glutaminyl-tRNA(Gln) + L-glutamate + ADP + phosphate + H(+). It catalyses the reaction L-aspartyl-tRNA(Asn) + L-glutamine + ATP + H2O = L-asparaginyl-tRNA(Asn) + L-glutamate + ADP + phosphate + 2 H(+). Functionally, allows the formation of correctly charged Asn-tRNA(Asn) or Gln-tRNA(Gln) through the transamidation of misacylated Asp-tRNA(Asn) or Glu-tRNA(Gln) in organisms which lack either or both of asparaginyl-tRNA or glutaminyl-tRNA synthetases. The reaction takes place in the presence of glutamine and ATP through an activated phospho-Asp-tRNA(Asn) or phospho-Glu-tRNA(Gln). The polypeptide is Aspartyl/glutamyl-tRNA(Asn/Gln) amidotransferase subunit C (Clostridium botulinum (strain 657 / Type Ba4)).